We begin with the raw amino-acid sequence, 963 residues long: SH3 domain-binding protein 4 (963 aa).

The 60-residue stretch at 55–114 (GNAKEVIAIKDYCPTNFTTLKFSKGDHLYVLDTSGGEWWYAHNTTEMGYIPSSYVQPLNY) folds into the SH3 1 domain. 5 positions are modified to phosphoserine: serine 131, serine 246, serine 251, serine 279, and serine 296. The ZU5 domain maps to 317 to 454 (TNIVCKLDSS…LEPCMYVAVV (138 aa)). Serine 637 is modified (phosphoserine). Residues 654–724 (SSLKFGKLLK…HTKNVLVVGR (71 aa)) form the SH3 2 domain.

Homodimer or homooligomer. Interacts with DNM2, EPS15, clathrin, the adapter protein complex 2/AP-2 and TFRC. Interacts with the Rag GTPases RRAGA, RRAGB, RRAGC and RRAGD; the interaction is most probably direct, preferentially occurs with their inactive GDP-bound form and is negatively regulated by amino acids. In terms of assembly, (Microbial infection) Interacts with molluscum contagiosum virus protein MC159L; this interaction is important for the suppression of autophagy. Post-translationally, phosphorylated upon EGF stimulation. Phosphorylation prevents interaction with DNM2. As to expression, expressed in all tissues tested with higher expression in pancreas. Expressed by retinal pigment epithelial cells (at protein level).

The protein localises to the membrane. Its subcellular location is the clathrin-coated pit. It localises to the cytoplasmic vesicle. The protein resides in the clathrin-coated vesicle. It is found in the nucleus. Its function is as follows. May function in transferrin receptor internalization at the plasma membrane through a cargo-specific control of clathrin-mediated endocytosis. Alternatively, may act as a negative regulator of the amino acid-induced TOR signaling by inhibiting the formation of active Rag GTPase complexes. Preferentially binds inactive Rag GTPase complexes and prevents their interaction with the mTORC1 complex inhibiting its relocalization to lysosomes and its activation. Thereby, may indirectly regulate cell growth, proliferation and autophagy. The polypeptide is SH3 domain-binding protein 4 (SH3BP4) (Homo sapiens (Human)).